Reading from the N-terminus, the 42-residue chain is MVNWELLKNPINWLIVILMLTIAGMAATLVCNHFGKNAVTSE.

A helical transmembrane segment spans residues 11-31; sequence INWLIVILMLTIAGMAATLVC.

In terms of assembly, heterodimer of P20 and P22; further multimerizes as hexamers of heterodimers. Part of the dodecameric portal complex that is composed of the packaging efficiency factor P6, the DNA packaging ATPase P9, and the internal heterododecamer P20/P22 which spans the virion inner membrane.

The protein localises to the virion membrane. Its function is as follows. Together with P22, forms the internal part of the portal complex embeded in the virion internal membrane and which plays critical roles in genome packaging and genome ejection. Both proteins multimerize as a single ring-shaped heterdodecamer arranged around a central channel and interact with the P6/P9 external part of the portal. In Acinetobacter calcoaceticus (Arthrobacter siderocapsulatus), this protein is Packaging protein P20 (XX).